The following is a 264-amino-acid chain: ATP synthase subunit a (264 aa).

Transmembrane regions (helical) follow at residues 30–50, 90–110, 111–131, 134–154, 177–197, 208–228, and 235–255; these read WNIDSLLFSVGLGMLFLWLFY, IAPLALTIFVWIFMMNFMDMI, PVDWLPSLALLAGVPYLKVVP, DVNITFSLALGVFVLIIYYSI, IPVNLLLETVTLVAKPISLAL, LIFILIALMYGSNVALSALGV, and LIFHILVITLQAFIFMMLTIV.

It belongs to the ATPase A chain family. As to quaternary structure, F-type ATPases have 2 components, CF(1) - the catalytic core - and CF(0) - the membrane proton channel. CF(1) has five subunits: alpha(3), beta(3), gamma(1), delta(1), epsilon(1). CF(0) has three main subunits: a(1), b(2) and c(9-12). The alpha and beta chains form an alternating ring which encloses part of the gamma chain. CF(1) is attached to CF(0) by a central stalk formed by the gamma and epsilon chains, while a peripheral stalk is formed by the delta and b chains.

It is found in the cell inner membrane. Functionally, key component of the proton channel; it plays a direct role in the translocation of protons across the membrane. The chain is ATP synthase subunit a from Shewanella frigidimarina (strain NCIMB 400).